Here is a 334-residue protein sequence, read N- to C-terminus: Holliday junction branch migration complex subunit RuvB (334 aa).

The large ATPase domain (RuvB-L) stretch occupies residues 4 to 186 (ADRLIAPENP…FGITQRLEYY (183 aa)). Residues I25, R26, G67, K70, T71, T72, 133–135 (EDY), R176, Y186, and R223 contribute to the ATP site. T71 is a binding site for Mg(2+). The small ATPAse domain (RuvB-S) stretch occupies residues 187 to 257 (KVKDLQDIVQ…TADKALNMLD (71 aa)). The tract at residues 260-334 (AEGFDYMDRK…RAYLHFGIEK (75 aa)) is head domain (RuvB-H). Residues R315 and R320 each coordinate DNA.

This sequence belongs to the RuvB family. Homohexamer. Forms an RuvA(8)-RuvB(12)-Holliday junction (HJ) complex. HJ DNA is sandwiched between 2 RuvA tetramers; dsDNA enters through RuvA and exits via RuvB. An RuvB hexamer assembles on each DNA strand where it exits the tetramer. Each RuvB hexamer is contacted by two RuvA subunits (via domain III) on 2 adjacent RuvB subunits; this complex drives branch migration. In the full resolvosome a probable DNA-RuvA(4)-RuvB(12)-RuvC(2) complex forms which resolves the HJ.

Its subcellular location is the cytoplasm. It catalyses the reaction ATP + H2O = ADP + phosphate + H(+). In terms of biological role, the RuvA-RuvB-RuvC complex processes Holliday junction (HJ) DNA during genetic recombination and DNA repair, while the RuvA-RuvB complex plays an important role in the rescue of blocked DNA replication forks via replication fork reversal (RFR). RuvA specifically binds to HJ cruciform DNA, conferring on it an open structure. The RuvB hexamer acts as an ATP-dependent pump, pulling dsDNA into and through the RuvAB complex. RuvB forms 2 homohexamers on either side of HJ DNA bound by 1 or 2 RuvA tetramers; 4 subunits per hexamer contact DNA at a time. Coordinated motions by a converter formed by DNA-disengaged RuvB subunits stimulates ATP hydrolysis and nucleotide exchange. Immobilization of the converter enables RuvB to convert the ATP-contained energy into a lever motion, pulling 2 nucleotides of DNA out of the RuvA tetramer per ATP hydrolyzed, thus driving DNA branch migration. The RuvB motors rotate together with the DNA substrate, which together with the progressing nucleotide cycle form the mechanistic basis for DNA recombination by continuous HJ branch migration. Branch migration allows RuvC to scan DNA until it finds its consensus sequence, where it cleaves and resolves cruciform DNA. The sequence is that of Holliday junction branch migration complex subunit RuvB from Vibrio campbellii (strain ATCC BAA-1116).